Reading from the N-terminus, the 374-residue chain is Patatin-2-Kuras 4 (374 aa).

The N-terminal stretch at 1 to 11 (MILATTSSTCA) is a signal peptide. A PNPLA domain is found at 20-217 (LSIDGGGIKG…TVGDPALLSL (198 aa)). The GXGXXG motif lies at 24–29 (GGGIKG). Residues 63–67 (GTSTG) carry the GXSXG motif. The active-site Nucleophile is the Ser65. N-linked (GlcNAc...) asparagine glycosylation occurs at Asn103. Asp203 serves as the catalytic Proton acceptor. The DGA/G motif lies at 203-205 (DGG). Residues 309–372 (ENALTGTTTE…DRKKLRANKA (64 aa)) adopt a coiled-coil conformation.

Belongs to the patatin family.

Its subcellular location is the vacuole. In terms of biological role, probable lipolytic acyl hydrolase (LAH), an activity which is thought to be involved in the response of tubers to pathogens. This is Patatin-2-Kuras 4 (pat2-k4) from Solanum tuberosum (Potato).